The chain runs to 194 residues: E3 ubiquitin-protein ligase RNF185 (194 aa).

The disordered stretch occupies residues 1–32 (MASKGPTTSASTKSSSTGGTSGSSSSNGAGDN). The interval 31–82 (DNTNQDNTFECNICLDTAKDAVISLCGHLFCWPCLHQWLETRPNRQVCPVCK) is required for ubiquitin ligase activity and protection against ER stress-induced cell death. The RING-type zinc finger occupies 41 to 82 (CNICLDTAKDAVISLCGHLFCWPCLHQWLETRPNRQVCPVCK). The segment at 92–125 (PLYGRGSTGQQDPREKTPPRPQGQRPEPENRGGF) is disordered. 2 consecutive transmembrane segments (helical) span residues 133 to 153 (GGFQ…ATAF) and 174 to 194 (QFLS…LLIA).

It localises to the mitochondrion outer membrane. The protein resides in the endoplasmic reticulum membrane. It carries out the reaction S-ubiquitinyl-[E2 ubiquitin-conjugating enzyme]-L-cysteine + [acceptor protein]-L-lysine = [E2 ubiquitin-conjugating enzyme]-L-cysteine + N(6)-ubiquitinyl-[acceptor protein]-L-lysine.. Its pathway is protein modification; protein ubiquitination. Its function is as follows. E3 ubiquitin-protein ligase that regulates selective mitochondrial autophagy by mediating 'Lys-63'-linked polyubiquitination. Acts in the endoplasmic reticulum (ER)-associated degradation (ERAD) pathway, which targets misfolded proteins that accumulate in the endoplasmic reticulum (ER) for ubiquitination and subsequent proteasome-mediated degradation. Protects cells from ER stress-induced apoptosis. Responsible for the cotranslational ubiquitination and degradation of CFTR in the ERAD pathway. Also acts as a regulator of the innate antiviral response by catalyzing 'Lys-27'-linked polyubiquitination of CGAS, thereby promoting CGAS cyclic GMP-AMP synthase activity. Preferentially associates with the E2 enzymes UBE2J1 and UBE2J2. This is E3 ubiquitin-protein ligase RNF185 (RNF185) from Gallus gallus (Chicken).